The chain runs to 108 residues: uncharacterized protein (108 aa).

A run of 3 helical transmembrane segments spans residues 36 to 56, 58 to 78, and 88 to 108; these read LAIM…DKMI, FIFV…KLLF, and IVFL…FFNL.

Its subcellular location is the cell membrane. This is an uncharacterized protein from Alkalihalophilus pseudofirmus (strain ATCC BAA-2126 / JCM 17055 / OF4) (Bacillus pseudofirmus).